The primary structure comprises 2968 residues: Polyketide synthase 37 (2968 aa).

In terms of domain architecture, Ketosynthase family 3 (KS3) spans 32–454; sequence KEPIAIIGIG…GSNSSLFLSS (423 aa). Catalysis depends on for beta-ketoacyl synthase activity residues Cys-198, His-338, and His-378. A malonyl-CoA:ACP transacylase (MAT) domain region spans residues 624–950; sequence FIFSGQGQQW…LSTLSKNSNS (327 aa). Ser-718 (for malonyltransferase activity) is an active-site residue. Residues 1017-1157 are N-terminal hotdog fold; the sequence is PPMFISLDRK…GIIKYGTNYL (141 aa). The 334-residue stretch at 1017-1350 folds into the PKS/mFAS DH domain; it reads PPMFISLDRK…FKGINSSSSS (334 aa). Residues 1031–1345 form a dehydratase (DH) domain region; sequence TPSFEVRLNQ…LTNLEFKGIN (315 aa). Residue His-1049 is the Proton acceptor; for dehydratase activity of the active site. The interval 1183-1350 is C-terminal hotdog fold; sequence FKSFNSNEFY…FKGINSSSSS (168 aa). Asp-1257 (proton donor; for dehydratase activity) is an active-site residue. The interval 1522-1547 is disordered; sequence SCGGGGGSTNNTISNSSSSISSIDNG. Residues 1530–1547 show a composition bias toward low complexity; that stretch reads TNNTISNSSSSISSIDNG. Residues 1718 to 2053 are enoyl reductase (ER) domain; it reads GIISDLKIKQ…SGNHIGKILI (336 aa). A ketoreductase (KR) domain region spans residues 2083–2277; it reads TYIFTGFGGL…LKSSCIHLAS (195 aa). The interval 2379 to 2400 is disordered; the sequence is GDGSFDDLNQLEDEGQQGFGNG. The region spanning 2421 to 2498 is the Carrier domain; it reads FDNDFYTKSI…STVELIKNKL (78 aa). The residue at position 2458 (Ser-2458) is an O-(pantetheine 4'-phosphoryl)serine. Residues 2568–2589 are disordered; the sequence is SSSSNNSNSKNELTSPPPSAKR. A chalcone synthase region spans residues 2707–2968; that stretch reads ISHVVGVTST…IEAILFKLIK (262 aa). Cys-2747 is a catalytic residue.

The cofactor is pantetheine 4'-phosphate.

The catalysed reaction is (E)-4-coumaroyl-CoA + 3 malonyl-CoA + 3 H(+) = 2',4,4',6'-tetrahydroxychalcone + 3 CO2 + 4 CoA. It carries out the reaction hexanoyl-CoA + 3 malonyl-CoA + 3 H(+) = 2,4,6-trihydroxyphenylhexan-1-one + 3 CO2 + 4 CoA. Its pathway is secondary metabolite biosynthesis; flavonoid biosynthesis. Polyketide synthase; part of the gene cluster that mediates the biosynthesis of DIF-1 (Differentiation Inducing Factor-1), a signal molecule involved in the differentiation of pstO (prestalk-O) cells. The three-step process begins with the formation of (2,4,6-trihydroxyphenyl)-1-hexan-1-one (THPH) by the polyketide synthase StlB. THPH is then dichlorinated by the flavin-dependent halogenase ChlA. The last step of DIF-1 biosynthesis is the O-methylation of dichloro-THPH (or des-methyl-DIF-1) by the methyltransferase DmtA to yield DIF-1. This chain is Polyketide synthase 37 (StlB), found in Dictyostelium discoideum (Social amoeba).